The following is a 162-amino-acid chain: Small ribosomal subunit protein uS7m (162 aa).

This sequence belongs to the universal ribosomal protein uS7 family. In terms of assembly, part of the small ribosomal subunit.

Its subcellular location is the mitochondrion. Its function is as follows. One of the primary rRNA binding proteins, it binds directly to 16S-like rRNA where it nucleates assembly of the head domain of the small subunit. This is Small ribosomal subunit protein uS7m (mrps7) from Dictyostelium citrinum (Slime mold).